Reading from the N-terminus, the 310-residue chain is Putative S-adenosyl-L-methionine-dependent methyltransferase MMAR_0356 (310 aa).

Residues D137 and 166–167 (DL) contribute to the S-adenosyl-L-methionine site.

The protein belongs to the UPF0677 family.

Functionally, exhibits S-adenosyl-L-methionine-dependent methyltransferase activity. The chain is Putative S-adenosyl-L-methionine-dependent methyltransferase MMAR_0356 from Mycobacterium marinum (strain ATCC BAA-535 / M).